Here is a 569-residue protein sequence, read N- to C-terminus: Myotubularin-related protein 9 (569 aa).

Residues 134-513 (GWSAFDLEQE…QCIKIWDRLF (380 aa)) form the Myotubularin phosphatase domain.

It belongs to the protein-tyrosine phosphatase family. Non-receptor class myotubularin subfamily. Heterodimer with lipid phosphatase mtm-6.

The protein localises to the cytoplasm. The protein resides in the membrane. In terms of biological role, may act as a regulatory subunit for mtm-6. In association with phosphatase mtm-6, plays a role in endosome trafficking probably by regulating phosphatidylinositol-3-phosphate levels. Regulates fluid phase endocytosis in coelomocytes. Regulates posterior migration of QL neuroblast descendants and the anterior migration of QR neuroblast descendants and HSN neurons during larval development probably by controlling Wnt ligand secretion through the regulation of sorting receptor mig-14 trafficking. Involved in the formation of correct synapse number in DA9 motor neurons. This Caenorhabditis elegans protein is Myotubularin-related protein 9.